A 215-amino-acid polypeptide reads, in one-letter code: Adenylate kinase (215 aa).

Residue 10-15 participates in ATP binding; sequence GAGKGT. The tract at residues 30 to 59 is NMP; the sequence is STGDMLRAAVKAGSPLGQQVKGVMDSGGLV. AMP contacts are provided by residues T31, R36, 57 to 59, 85 to 88, and Q92; these read GLV and GFPR. The segment at 122–159 is LID; that stretch reads GRRVHPASGRVYHTEHNPPKVAGKDDVTGEELIQREDD. ATP is bound by residues R123 and 132–133; that span reads VY. The AMP site is built by R156 and R167. G201 lines the ATP pocket.

Belongs to the adenylate kinase family. As to quaternary structure, monomer.

The protein localises to the cytoplasm. It catalyses the reaction AMP + ATP = 2 ADP. The protein operates within purine metabolism; AMP biosynthesis via salvage pathway; AMP from ADP: step 1/1. In terms of biological role, catalyzes the reversible transfer of the terminal phosphate group between ATP and AMP. Plays an important role in cellular energy homeostasis and in adenine nucleotide metabolism. The chain is Adenylate kinase from Pseudomonas aeruginosa (strain LESB58).